The chain runs to 262 residues: MESDCQFLVAPPQPHMYYDTAAAAVDEAQFLRQMVAAADHHAAAAGRGGGDGDGGGGGGGGGGERKRRFTEEQVRSLETTFHARRAKLEPREKAELARELGLQPRQVAIWFQNKRARWRSKQIEHDYAALRAQYDALHARVESLRQEKLALAAQVDELRGKLNERQDQSGSCDGGGAEGDDDDKRNSVMNASSSGLVEEDYVSCLAVPVVDVSEDGSAACGGSSYEYDHHLDYLGGGQLPDPFCGMPDLWETWPMVEWNAVA.

Disordered stretches follow at residues 44 to 68 (AAGRGGGDGDGGGGGGGGGGERKRR) and 162 to 189 (LNERQDQSGSCDGGGAEGDDDDKRNSVM). A compositionally biased stretch (gly residues) spans 46–62 (GRGGGDGDGGGGGGGGG). The homeobox DNA-binding region spans 61-122 (GGGERKRRFT…NKRARWRSKQ (62 aa)). A leucine-zipper region spans residues 121-165 (KQIEHDYAALRAQYDALHARVESLRQEKLALAAQVDELRGKLNER).

Belongs to the HD-ZIP homeobox family. Class I subfamily. Expressed in roots and panicles.

The protein resides in the nucleus. Its function is as follows. Probable transcription factor. The chain is Homeobox-leucine zipper protein HOX24 (HOX24) from Oryza sativa subsp. indica (Rice).